The following is a 253-amino-acid chain: Vitamin B12 import ATP-binding protein BtuD (253 aa).

The ABC transporter domain maps to 4 to 236; the sequence is LQLNNVSVGT…DVLSQVFEVD (233 aa). 32–39 lines the ATP pocket; that stretch reads GPNGAGKS.

Belongs to the ABC transporter superfamily. Vitamin B12 importer (TC 3.A.1.13.1) family. As to quaternary structure, the complex is composed of two ATP-binding proteins (BtuD), two transmembrane proteins (BtuC) and a solute-binding protein (BtuF).

Its subcellular location is the cell inner membrane. It catalyses the reaction an R-cob(III)alamin(out) + ATP + H2O = an R-cob(III)alamin(in) + ADP + phosphate + H(+). In terms of biological role, part of the ABC transporter complex BtuCDF involved in vitamin B12 import. Responsible for energy coupling to the transport system. This is Vitamin B12 import ATP-binding protein BtuD from Yersinia pestis.